Consider the following 336-residue polypeptide: Serpentine receptor class delta-51 (336 aa).

Transmembrane regions (helical) follow at residues 14–34 (VYYSLNVTLALSINILLLFIM), 48–68 (YLFNTALFEIIVSLSTYFAQC), 93–113 (CFVTFAVVQCSVVAASFSILL), 133–153 (ATTFIIFSFFPTVMLLFQLLT), 188–208 (AAIIAQSLISLGVYMSPLIAF), 237–257 (GLLIQTLIPFCVYIPPYSYFL), and 275–295 (IFGSFTAFINPLLTFYFVLPY).

Belongs to the nematode receptor-like protein srd family.

The protein resides in the membrane. This Caenorhabditis elegans protein is Serpentine receptor class delta-51 (srd-51).